Here is a 182-residue protein sequence, read N- to C-terminus: UPF0423 protein BRA0381/BS1330_II0378 (182 aa).

The N-terminal stretch at 1-24 (MKNLFRTAALMVPLSLALAYGAQA) is a signal peptide.

Belongs to the UPF0423 family.

The chain is UPF0423 protein BRA0381/BS1330_II0378 from Brucella suis biovar 1 (strain 1330).